We begin with the raw amino-acid sequence, 221 residues long: Pyridoxal phosphate homeostasis protein (221 aa).

At Lys26 the chain carries N6-(pyridoxal phosphate)lysine.

The protein belongs to the pyridoxal phosphate-binding protein YggS/PROSC family.

Functionally, pyridoxal 5'-phosphate (PLP)-binding protein, which is involved in PLP homeostasis. The polypeptide is Pyridoxal phosphate homeostasis protein (Corynebacterium glutamicum (strain ATCC 13032 / DSM 20300 / JCM 1318 / BCRC 11384 / CCUG 27702 / LMG 3730 / NBRC 12168 / NCIMB 10025 / NRRL B-2784 / 534)).